We begin with the raw amino-acid sequence, 193 residues long: Large ribosomal subunit protein bL25 (193 aa).

It belongs to the bacterial ribosomal protein bL25 family. CTC subfamily. In terms of assembly, part of the 50S ribosomal subunit; part of the 5S rRNA/L5/L18/L25 subcomplex. Contacts the 5S rRNA. Binds to the 5S rRNA independently of L5 and L18.

This is one of the proteins that binds to the 5S RNA in the ribosome where it forms part of the central protuberance. This chain is Large ribosomal subunit protein bL25, found in Hydrogenovibrio crunogenus (strain DSM 25203 / XCL-2) (Thiomicrospira crunogena).